The sequence spans 708 residues: Leukotoxin translocation ATP-binding protein LktB (708 aa).

One can recognise a Peptidase C39 domain in the interval 1 to 126 (MEANHQRNDL…ACYQGQLILV (126 aa)). The 283-residue stretch at 155-437 (FLETLIVSIF…LAQLWQDFQQ (283 aa)) folds into the ABC transmembrane type-1 domain. A run of 5 helical transmembrane segments spans residues 159-179 (LIVS…FQVV), 192-212 (LNII…LSGL), 270-290 (ALTS…MWYY), 296-316 (LVIL…SPIL), and 389-409 (VMVI…LSIG). One can recognise an ABC transporter domain in the interval 469–704 (ISFKNIRFRY…SNGLYSYLHQ (236 aa)). 503-510 (GRSGSGKS) contributes to the ATP binding site.

It belongs to the ABC transporter superfamily. Protein-1 exporter (TC 3.A.1.109) family. In terms of assembly, homodimer.

It is found in the cell inner membrane. The catalysed reaction is ATP + H2O + proteinSide 1 = ADP + phosphate + proteinSide 2.. In terms of biological role, part of the ABC transporter complex LktBD involved in leukotoxin export. Transmembrane domains (TMD) form a pore in the inner membrane and the ATP-binding domain (NBD) is responsible for energy generation. This chain is Leukotoxin translocation ATP-binding protein LktB (lktB), found in Mannheimia haemolytica (Pasteurella haemolytica).